The sequence spans 341 residues: MAPMGIRLSPLGIAVFCLLGVGVIYHLYAGVLSSRLAFFRQKRTVDLRELLALSIDAAVQGGREVKRIREDNTLEEKSKGKTKEGASEKYTLGDLNSHRKMYYLIKNTFPNIQVNSEEHANAEGEATVWTRMIPEDILAKVSGGKEIPAEKITVWIDPLDATQEYTENLLKYVTTMVCVAVDGEPVIGVIHKPFTGYTVWGFVGEGSNVAPRDSYNTNSPKVIVSRSHAGKVKSFVQTAFGNNTEIIPAGGAGYKALALLNPTDDKQETADIYIHVTYIKKWDICAGDAILKSLGGQMTTLKGEQIDYSGLEGNKGGLLASMKVDHKALVKRLPLWEDNKQ.

The helical transmembrane segment at Leu-11–Val-31 threads the bilayer. Mg(2+) contacts are provided by Glu-117, Asp-157, Leu-159, Asp-160, and Asp-283. A substrate-binding site is contributed by Glu-117. Substrate is bound by residues Leu-159–Thr-162 and Asp-283.

It belongs to the inositol monophosphatase superfamily. It depends on Mg(2+) as a cofactor.

The protein localises to the membrane. The enzyme catalyses a myo-inositol phosphate + H2O = myo-inositol + phosphate. The protein operates within polyol metabolism; myo-inositol biosynthesis; myo-inositol from D-glucose 6-phosphate: step 2/2. This chain is Inositol monophosphatase 3 (bpnt2), found in Danio rerio (Zebrafish).